Here is a 227-residue protein sequence, read N- to C-terminus: H-2 class II histocompatibility antigen, A-U alpha chain (227 aa).

The tract at residues 1 to 82 (DHVGSYGIVV…KRSNSTPATN (82 aa)) is alpha-1. Over 1–189 (DHVGSYGIVV…IPAPMSELTE (189 aa)) the chain is Extracellular. Positions 83-176 (EAPQATVFPK…GLEEPVLKHW (94 aa)) are alpha-2. The 93-residue stretch at 85–177 (PQATVFPKSP…LEEPVLKHWE (93 aa)) folds into the Ig-like C1-type domain. The cysteines at positions 105 and 161 are disulfide-linked. A glycan (N-linked (GlcNAc...) asparagine) is linked at asparagine 116. Residues 177–189 (EPEIPAPMSELTE) form a connecting peptide region. A helical membrane pass occupies residues 190-215 (TVVCALGLSVGLVGIVVGTIFIIQGL). Residues 216-227 (RSGGTSRHPGPL) lie on the Cytoplasmic side of the membrane.

Belongs to the MHC class II family.

Its subcellular location is the membrane. The polypeptide is H-2 class II histocompatibility antigen, A-U alpha chain (H2-Aa) (Mus musculus (Mouse)).